Here is a 310-residue protein sequence, read N- to C-terminus: NAD-dependent protein deacylase sirtuin-5, mitochondrial (310 aa).

The transit peptide at 1–36 (MQPLQIAPCRLLYGLYRGLKSPASTGTRICPAMARP) directs the protein to the mitochondrion. In terms of domain architecture, Deacetylase sirtuin-type spans 37–307 (SSNMADFRKL…PEALAPHETG (271 aa)). 58–77 (GAGVSAESGVPTFRGAGGYW) is an NAD(+) binding site. Y102 and R105 together coordinate substrate. 140–143 (QNID) contacts NAD(+). H158 serves as the catalytic Proton acceptor. Zn(2+) contacts are provided by C166, C169, C207, and C212. Residues 249-251 (GTS), 275-277 (NME), and C293 contribute to the NAD(+) site.

This sequence belongs to the sirtuin family. Class III subfamily. As to quaternary structure, monomer. Homodimer. Interacts with CPS1. Interacts with PCCA. It depends on Zn(2+) as a cofactor.

It is found in the mitochondrion. Its subcellular location is the cytoplasm. The protein localises to the cytosol. It localises to the nucleus. It carries out the reaction N(6)-malonyl-L-lysyl-[protein] + NAD(+) + H2O = 2''-O-malonyl-ADP-D-ribose + nicotinamide + L-lysyl-[protein]. It catalyses the reaction N(6)-succinyl-L-lysyl-[protein] + NAD(+) + H2O = 2''-O-succinyl-ADP-D-ribose + nicotinamide + L-lysyl-[protein]. The catalysed reaction is N(6)-glutaryl-L-lysyl-[protein] + NAD(+) + H2O = 2''-O-glutaryl-ADP-D-ribose + nicotinamide + L-lysyl-[protein]. Its function is as follows. NAD-dependent lysine demalonylase, desuccinylase and deglutarylase that specifically removes malonyl, succinyl and glutaryl groups on target proteins. Activates CPS1 and contributes to the regulation of blood ammonia levels during prolonged fasting: acts by mediating desuccinylation and deglutarylation of CPS1, thereby increasing CPS1 activity in response to elevated NAD levels during fasting. Activates SOD1 by mediating its desuccinylation, leading to reduced reactive oxygen species. Activates SHMT2 by mediating its desuccinylation. Modulates ketogenesis through the desuccinylation and activation of HMGCS2. Has weak NAD-dependent protein deacetylase activity; however this activity may not be physiologically relevant in vivo. Can deacetylate cytochrome c (CYCS) and a number of other proteins in vitro such as UOX. This chain is NAD-dependent protein deacylase sirtuin-5, mitochondrial, found in Canis lupus familiaris (Dog).